The sequence spans 203 residues: MIIYKYGKIMHVNTNYLILDHNGEGDLIYAPNISRFKKDELRKIFISQIENEYTKVTYGFDNFKELVIFEDLIEIQGLGPKTAISILNIGWENVINYVATANKGALGKIPYVSSKIANAIIFSYQDKYAKFMKKLTSDEAAKIKVPASSENENKFLDTMKMLGFKQQQIKFALDKIELNDDIETCVENAIKLISQQQHETSRV.

The domain I stretch occupies residues 1–61; sequence MIIYKYGKIM…EYTKVTYGFD (61 aa). The domain II stretch occupies residues 62 to 139; it reads NFKELVIFED…KFMKKLTSDE (78 aa). The flexible linker stretch occupies residues 140–147; sequence AAKIKVPA. Positions 147 to 203 are domain III; it reads ASSENENKFLDTMKMLGFKQQQIKFALDKIELNDDIETCVENAIKLISQQQHETSRV.

It belongs to the RuvA family. In terms of assembly, homotetramer. Forms an RuvA(8)-RuvB(12)-Holliday junction (HJ) complex. HJ DNA is sandwiched between 2 RuvA tetramers; dsDNA enters through RuvA and exits via RuvB. An RuvB hexamer assembles on each DNA strand where it exits the tetramer. Each RuvB hexamer is contacted by two RuvA subunits (via domain III) on 2 adjacent RuvB subunits; this complex drives branch migration. In the full resolvosome a probable DNA-RuvA(4)-RuvB(12)-RuvC(2) complex forms which resolves the HJ.

Its subcellular location is the cytoplasm. Functionally, the RuvA-RuvB-RuvC complex processes Holliday junction (HJ) DNA during genetic recombination and DNA repair, while the RuvA-RuvB complex plays an important role in the rescue of blocked DNA replication forks via replication fork reversal (RFR). RuvA specifically binds to HJ cruciform DNA, conferring on it an open structure. The RuvB hexamer acts as an ATP-dependent pump, pulling dsDNA into and through the RuvAB complex. HJ branch migration allows RuvC to scan DNA until it finds its consensus sequence, where it cleaves and resolves the cruciform DNA. The chain is Holliday junction branch migration complex subunit RuvA from Metamycoplasma arthritidis (strain 158L3-1) (Mycoplasma arthritidis).